The primary structure comprises 490 residues: Alginate production protein AlgE (490 aa).

An N-terminal signal peptide occupies residues 1–32; sequence MNSSRSVNPRPSFAPRALSLAIALLLGAPAFA. Composition is skewed to polar residues over residues 102–115 and 343–355; these read DTLQ…NNSR and QFQQ…NRSN. Disordered regions lie at residues 102–121 and 331–355; these read DTLQ…GREP and ARGS…NRSN.

This sequence belongs to the AlgE family.

Its subcellular location is the cell outer membrane. It functions in the pathway glycan biosynthesis; alginate biosynthesis. Functionally, has non-porin-like, channel-forming properties and probably functions as an alginate permeability pore. The sequence is that of Alginate production protein AlgE (algE) from Pseudomonas aeruginosa (strain ATCC 15692 / DSM 22644 / CIP 104116 / JCM 14847 / LMG 12228 / 1C / PRS 101 / PAO1).